Reading from the N-terminus, the 300-residue chain is MAPVQLKNKESQTARIVGSASAGILELSLFHPVDTISKRLMSNHGKITSLTQLNTVIFRDAASAPLLQKATSLFPGLGYAACYKIVQRIYKYSGQPIVKDFLNENYRHTFDKTFGKGSGKAIMHATAGSIVGIGEIFLLPLDVLKIKRQTNPAAFKGRGVFRILADEKFALYRGWGWTAARNAPGSFALFGGNAFAKEYIFKLKDYSQATFFQNFFTSIAGASASLIVSAPLDVIKTRIQNKNFDNPQSGFTILKNMLKFEGPTSFFKGLTPKLLTTGPKLVFSFTMAQTLIPFFDKLLK.

Solcar repeat units lie at residues 10-101, 119-199, and 212-294; these read ESQT…VKDF, GKAI…AKEY, and FQNF…LIPF. 6 helical membrane-spanning segments follow: residues 16 to 36, 70 to 86, 121 to 141, 178 to 198, 215 to 235, and 275 to 295; these read IVGS…VDTI, ATSL…YKIV, AIMH…LLPL, TAAR…FAKE, FFTS…LDVI, and LTTG…IPFF.

This sequence belongs to the mitochondrial carrier (TC 2.A.29) family.

The protein localises to the mitochondrion inner membrane. This is an uncharacterized protein from Schizosaccharomyces pombe (strain 972 / ATCC 24843) (Fission yeast).